The sequence spans 257 residues: MSQIKFKNVSKVYPNGHVGLKNINLNIEKGEFAVIVGLSGAGKSTLLRSVNRLHDITSGEIFIQGKSITKAHGKALLEMRRNIGMIFQHFNLVKRSSVLRNVLSGRVGYHPTWKMVLGLFPKEDKIKAMDALERVNILDKYNQRSDELSGGQQQRISIARALCQESEIILADEPVASLDPLTTKQVMDDLRKINQELGITILINLHFVDLAKEYGTRIIGLRDGEVVYDGPASEATDDVFSKIYGRTIKEDEKLGVN.

In terms of domain architecture, ABC transporter spans 4-248; that stretch reads IKFKNVSKVY…VFSKIYGRTI (245 aa). 37-44 is an ATP binding site; it reads GLSGAGKS.

The protein belongs to the ABC transporter superfamily. Phosphonates importer (TC 3.A.1.9.1) family. In terms of assembly, the complex is composed of two ATP-binding proteins (PhnC), two transmembrane proteins (PhnE) and a solute-binding protein (PhnD).

It is found in the cell membrane. The catalysed reaction is phosphonate(out) + ATP + H2O = phosphonate(in) + ADP + phosphate + H(+). Its function is as follows. Part of the ABC transporter complex PhnCDE involved in phosphonates import. Responsible for energy coupling to the transport system. The protein is Phosphonates import ATP-binding protein PhnC of Staphylococcus aureus (strain MRSA252).